Reading from the N-terminus, the 578-residue chain is Potassium-transporting ATPase potassium-binding subunit (578 aa).

11 consecutive transmembrane segments (helical) span residues 3 to 23, 67 to 87, 95 to 115, 136 to 156, 181 to 201, 264 to 284, 291 to 311, 396 to 416, 436 to 456, 504 to 524, and 543 to 563; these read AAAL…AVPL, AAAA…LERL, PAGL…SFAT, ALTV…AALV, LLLP…VPQT, LEAL…GALV, WTVY…TVSA, GLYG…LMVG, LAIL…CLLP, VAML…AGAF, and LFAG…FLPA.

The protein belongs to the KdpA family. The system is composed of three essential subunits: KdpA, KdpB and KdpC.

It is found in the cell inner membrane. Functionally, part of the high-affinity ATP-driven potassium transport (or Kdp) system, which catalyzes the hydrolysis of ATP coupled with the electrogenic transport of potassium into the cytoplasm. This subunit binds the periplasmic potassium ions and delivers the ions to the membrane domain of KdpB through an intramembrane tunnel. This Anaeromyxobacter dehalogenans (strain 2CP-C) protein is Potassium-transporting ATPase potassium-binding subunit.